The following is a 97-amino-acid chain: Aspartyl/glutamyl-tRNA(Asn/Gln) amidotransferase subunit C (97 aa).

Belongs to the GatC family. Heterotrimer of A, B and C subunits.

The catalysed reaction is L-glutamyl-tRNA(Gln) + L-glutamine + ATP + H2O = L-glutaminyl-tRNA(Gln) + L-glutamate + ADP + phosphate + H(+). It catalyses the reaction L-aspartyl-tRNA(Asn) + L-glutamine + ATP + H2O = L-asparaginyl-tRNA(Asn) + L-glutamate + ADP + phosphate + 2 H(+). Allows the formation of correctly charged Asn-tRNA(Asn) or Gln-tRNA(Gln) through the transamidation of misacylated Asp-tRNA(Asn) or Glu-tRNA(Gln) in organisms which lack either or both of asparaginyl-tRNA or glutaminyl-tRNA synthetases. The reaction takes place in the presence of glutamine and ATP through an activated phospho-Asp-tRNA(Asn) or phospho-Glu-tRNA(Gln). The chain is Aspartyl/glutamyl-tRNA(Asn/Gln) amidotransferase subunit C from Prochlorococcus marinus (strain AS9601).